Reading from the N-terminus, the 403-residue chain is Propionate kinase (403 aa).

The protein belongs to the acetokinase family. PduW subfamily.

Its subcellular location is the cytoplasm. It carries out the reaction propanoate + ATP = propanoyl phosphate + ADP. It functions in the pathway polyol metabolism; 1,2-propanediol degradation. Its function is as follows. Works with phosphate acetyltransferase (pta) to capture exogenous propionate and regenerate propionyl-CoA during degradation of 1,2-propanediol (1,2-PD). In Citrobacter rodentium (strain ICC168) (Citrobacter freundii biotype 4280), this protein is Propionate kinase.